The following is a 141-amino-acid chain: S-adenosylmethionine decarboxylase proenzyme (141 aa).

The active-site Schiff-base intermediate with substrate; via pyruvic acid is the Ser63. Ser63 carries the post-translational modification Pyruvic acid (Ser); by autocatalysis. The active-site Proton acceptor; for processing activity is the His68. Residue Cys83 is the Proton donor; for catalytic activity of the active site.

Belongs to the prokaryotic AdoMetDC family. Type 1 subfamily. Heterotetramer of two alpha and two beta chains arranged as a dimer of alpha/beta heterodimers. Requires pyruvate as cofactor. Is synthesized initially as an inactive proenzyme. Formation of the active enzyme involves a self-maturation process in which the active site pyruvoyl group is generated from an internal serine residue via an autocatalytic post-translational modification. Two non-identical subunits are generated from the proenzyme in this reaction, and the pyruvate is formed at the N-terminus of the alpha chain, which is derived from the carboxyl end of the proenzyme. The post-translation cleavage follows an unusual pathway, termed non-hydrolytic serinolysis, in which the side chain hydroxyl group of the serine supplies its oxygen atom to form the C-terminus of the beta chain, while the remainder of the serine residue undergoes an oxidative deamination to produce ammonia and the pyruvoyl group blocking the N-terminus of the alpha chain.

The enzyme catalyses S-adenosyl-L-methionine + H(+) = S-adenosyl 3-(methylsulfanyl)propylamine + CO2. It functions in the pathway amine and polyamine biosynthesis; S-adenosylmethioninamine biosynthesis; S-adenosylmethioninamine from S-adenosyl-L-methionine: step 1/1. Functionally, catalyzes the decarboxylation of S-adenosylmethionine to S-adenosylmethioninamine (dcAdoMet), the propylamine donor required for the synthesis of the polyamines spermine and spermidine from the diamine putrescine. The protein is S-adenosylmethionine decarboxylase proenzyme of Thermococcus onnurineus (strain NA1).